Consider the following 74-residue polypeptide: DNA-directed RNA polymerase subunit omega (74 aa).

It belongs to the RNA polymerase subunit omega family. As to quaternary structure, the RNAP catalytic core consists of 2 alpha, 1 beta, 1 beta' and 1 omega subunit. When a sigma factor is associated with the core the holoenzyme is formed, which can initiate transcription.

It carries out the reaction RNA(n) + a ribonucleoside 5'-triphosphate = RNA(n+1) + diphosphate. Functionally, promotes RNA polymerase assembly. Latches the N- and C-terminal regions of the beta' subunit thereby facilitating its interaction with the beta and alpha subunits. This is DNA-directed RNA polymerase subunit omega from Solidesulfovibrio magneticus (strain ATCC 700980 / DSM 13731 / RS-1) (Desulfovibrio magneticus).